The sequence spans 64 residues: Bowman-Birk type trypsin inhibitor TI1 (64 aa).

Intrachain disulfides connect Cys-9–Cys-61, Cys-10–Cys-25, Cys-15–Cys-23, Cys-32–Cys-39, and Cys-36–Cys-49.

It belongs to the Bowman-Birk serine protease inhibitor family.

This Coix lacryma-jobi (Job's tears) protein is Bowman-Birk type trypsin inhibitor TI1.